Reading from the N-terminus, the 1099-residue chain is Carbamoyl phosphate synthase large chain (1099 aa).

The tract at residues 1–402 (MPRREDIKRI…ALGKALRSLE (402 aa)) is carboxyphosphate synthetic domain. 12 residues coordinate ATP: R129, R169, G175, G176, E208, V210, E215, G241, I242, H243, Q285, and E299. The ATP-grasp 1 domain occupies 133 to 328 (KKTMEEAGLE…IAKIAALLAV (196 aa)). Positions 285, 299, and 301 each coordinate Mg(2+). Positions 285, 299, and 301 each coordinate Mn(2+). The segment at 403-541 (LDAAPKLDLD…STYNGVENEA (139 aa)) is oligomerization domain. The segment at 542–944 (IPTDKEKIMI…AFAKAEIAAG (403 aa)) is carbamoyl phosphate synthetic domain. An ATP-grasp 2 domain is found at 666–857 (AKLLKRIGLR…VAKIAAKIMV (192 aa)). 10 residues coordinate ATP: R702, K741, L743, E748, G773, V774, H775, S776, Q816, and E828. The Mg(2+) site is built by Q816, E828, and N830. Mn(2+) is bound by residues Q816, E828, and N830. An MGS-like domain is found at 945–1099 (NPLPTEGAIL…VRKLTDTWKM (155 aa)). An allosteric domain region spans residues 945–1099 (NPLPTEGAIL…VRKLTDTWKM (155 aa)).

The protein belongs to the CarB family. Composed of two chains; the small (or glutamine) chain promotes the hydrolysis of glutamine to ammonia, which is used by the large (or ammonia) chain to synthesize carbamoyl phosphate. Tetramer of heterodimers (alpha,beta)4. It depends on Mg(2+) as a cofactor. Mn(2+) serves as cofactor.

It carries out the reaction hydrogencarbonate + L-glutamine + 2 ATP + H2O = carbamoyl phosphate + L-glutamate + 2 ADP + phosphate + 2 H(+). The enzyme catalyses hydrogencarbonate + NH4(+) + 2 ATP = carbamoyl phosphate + 2 ADP + phosphate + 2 H(+). The protein operates within amino-acid biosynthesis; L-arginine biosynthesis; carbamoyl phosphate from bicarbonate: step 1/1. It participates in pyrimidine metabolism; UMP biosynthesis via de novo pathway; (S)-dihydroorotate from bicarbonate: step 1/3. Its function is as follows. Large subunit of the glutamine-dependent carbamoyl phosphate synthetase (CPSase). CPSase catalyzes the formation of carbamoyl phosphate from the ammonia moiety of glutamine, carbonate, and phosphate donated by ATP, constituting the first step of 2 biosynthetic pathways, one leading to arginine and/or urea and the other to pyrimidine nucleotides. The large subunit (synthetase) binds the substrates ammonia (free or transferred from glutamine from the small subunit), hydrogencarbonate and ATP and carries out an ATP-coupled ligase reaction, activating hydrogencarbonate by forming carboxy phosphate which reacts with ammonia to form carbamoyl phosphate. The chain is Carbamoyl phosphate synthase large chain from Thermotoga neapolitana (strain ATCC 49049 / DSM 4359 / NBRC 107923 / NS-E).